The primary structure comprises 122 residues: Large ribosomal subunit protein uL14 (122 aa).

This sequence belongs to the universal ribosomal protein uL14 family. Part of the 50S ribosomal subunit. Forms a cluster with proteins L3 and L19. In the 70S ribosome, L14 and L19 interact and together make contacts with the 16S rRNA in bridges B5 and B8.

Functionally, binds to 23S rRNA. Forms part of two intersubunit bridges in the 70S ribosome. This chain is Large ribosomal subunit protein uL14, found in Rickettsia felis (strain ATCC VR-1525 / URRWXCal2) (Rickettsia azadi).